We begin with the raw amino-acid sequence, 227 residues long: Phosphatidate cytidylyltransferase (227 aa).

The next 6 helical transmembrane spans lie at F31–M51, I65–L85, W93–G113, W131–I151, I165–I185, and G206–I226.

This sequence belongs to the CDS family.

Its subcellular location is the cell membrane. It carries out the reaction a 1,2-diacyl-sn-glycero-3-phosphate + CTP + H(+) = a CDP-1,2-diacyl-sn-glycerol + diphosphate. It participates in phospholipid metabolism; CDP-diacylglycerol biosynthesis; CDP-diacylglycerol from sn-glycerol 3-phosphate: step 3/3. The protein is Phosphatidate cytidylyltransferase (cdsA) of Rickettsia felis (strain ATCC VR-1525 / URRWXCal2) (Rickettsia azadi).